A 412-amino-acid chain; its full sequence is Protein trichome birefringence-like 13 (412 aa).

The helical; Signal-anchor for type II membrane protein transmembrane segment at P9 to L29 threads the bilayer. The GDS motif signature appears at G137–S139. The short motif at D385–N399 is the DCXHWCLPGXXDXWN motif element.

It belongs to the PC-esterase family. TBL subfamily.

Its subcellular location is the membrane. May act as a bridging protein that binds pectin and other cell wall polysaccharides. Probably involved in maintaining esterification of pectins. May be involved in the specific O-acetylation of cell wall polymers. The sequence is that of Protein trichome birefringence-like 13 (TBL13) from Arabidopsis thaliana (Mouse-ear cress).